The sequence spans 477 residues: Argininosuccinate lyase (477 aa).

It belongs to the lyase 1 family. Argininosuccinate lyase subfamily.

The protein resides in the cytoplasm. The catalysed reaction is 2-(N(omega)-L-arginino)succinate = fumarate + L-arginine. It participates in amino-acid biosynthesis; L-arginine biosynthesis; L-arginine from L-ornithine and carbamoyl phosphate: step 3/3. The protein is Argininosuccinate lyase of Acinetobacter baumannii (strain AB307-0294).